Consider the following 446-residue polypeptide: Chromosomal replication initiator protein DnaA (446 aa).

Positions M1–K73 are domain I, interacts with DnaA modulators. The domain II stretch occupies residues K73 to S107. The segment at M108–S324 is domain III, AAA+ region. ATP-binding residues include G152, G154, K155, and T156. The tract at residues S325–K446 is domain IV, binds dsDNA.

This sequence belongs to the DnaA family. Oligomerizes as a right-handed, spiral filament on DNA at oriC.

The protein resides in the cytoplasm. Functionally, plays an essential role in the initiation and regulation of chromosomal replication. ATP-DnaA binds to the origin of replication (oriC) to initiate formation of the DNA replication initiation complex once per cell cycle. Binds the DnaA box (a 9 base pair repeat at the origin) and separates the double-stranded (ds)DNA. Forms a right-handed helical filament on oriC DNA; dsDNA binds to the exterior of the filament while single-stranded (ss)DNA is stabiized in the filament's interior. The ATP-DnaA-oriC complex binds and stabilizes one strand of the AT-rich DNA unwinding element (DUE), permitting loading of DNA polymerase. After initiation quickly degrades to an ADP-DnaA complex that is not apt for DNA replication. Binds acidic phospholipids. This Clostridium acetobutylicum (strain ATCC 824 / DSM 792 / JCM 1419 / IAM 19013 / LMG 5710 / NBRC 13948 / NRRL B-527 / VKM B-1787 / 2291 / W) protein is Chromosomal replication initiator protein DnaA.